Reading from the N-terminus, the 513-residue chain is GMP synthase [glutamine-hydrolyzing] (513 aa).

Residues 3 to 192 (TVVVLDYGSQ…VSKVAKMEKN (190 aa)) form the Glutamine amidotransferase type-1 domain. Cys80 functions as the Nucleophile in the catalytic mechanism. Residues His166 and Glu168 contribute to the active site. The GMPS ATP-PPase domain maps to 193-388 (WKMTDFIEEK…LGLPDEMINR (196 aa)). 220-226 (SGGVDSS) is an ATP binding site.

As to quaternary structure, homodimer.

The enzyme catalyses XMP + L-glutamine + ATP + H2O = GMP + L-glutamate + AMP + diphosphate + 2 H(+). It participates in purine metabolism; GMP biosynthesis; GMP from XMP (L-Gln route): step 1/1. In terms of biological role, catalyzes the synthesis of GMP from XMP. This Thermosipho africanus (strain TCF52B) protein is GMP synthase [glutamine-hydrolyzing].